A 403-amino-acid chain; its full sequence is Envelope glycoprotein D (403 aa).

The first 34 residues, 1 to 34, serve as a signal peptide directing secretion; sequence MNRYRYESIFFRYISSTRMILIICLLLGIGDMSA. Topologically, residues 35-357 are virion surface; that stretch reads MGLKKDNSPI…ISTEKKSRTQ (323 aa). N-linked (GlcNAc...) asparagine; by host glycosylation is found at Asn-87 and Asn-138. Cystine bridges form between Cys-88-Cys-209, Cys-127-Cys-222, and Cys-139-Cys-148. N-linked (GlcNAc...) asparagine; by host glycosylation is found at Asn-230 and Asn-306. Residues 358 to 378 form a helical membrane-spanning segment; it reads IIISLVVLCVMFCFIVIGSGI. The Intravirion segment spans residues 379 to 403; that stretch reads WILRKHRKTVMYDRRRPSRRAYSRL.

This sequence belongs to the herpesviridae glycoprotein D family.

It localises to the virion membrane. Its function is as follows. Envelope glycoprotein that binds to host cell entry receptors, promoting the virus entry into host cells. May trigger fusion with host membrane, by recruiting the fusion machinery composed of gB and gH/gL. The sequence is that of Envelope glycoprotein D (MDV094) from Gallus gallus (Chicken).